A 780-amino-acid chain; its full sequence is ATP-dependent 6-phosphofructokinase, muscle type (780 aa).

The residue at position 2 (threonine 2) is an N-acetylthreonine. Residues threonine 2–histidine 390 are N-terminal catalytic PFK domain 1. ATP contacts are provided by residues glycine 25, arginine 88–cysteine 89, and glycine 118–serine 121. Aspartate 119 provides a ligand contact to Mg(2+). A Phosphoserine modification is found at serine 133. Substrate is bound by residues serine 164–aspartate 166, arginine 201, methionine 208–arginine 210, glutamate 264, arginine 292, and histidine 298–arginine 301. Catalysis depends on aspartate 166, which acts as the Proton acceptor. Phosphoserine is present on serine 377. The tract at residues isoleucine 391–tyrosine 401 is interdomain linker. Residues threonine 402 to valine 780 are C-terminal regulatory PFK domain 2. Residues arginine 471 and threonine 528–asparagine 532 contribute to the beta-D-fructose 2,6-bisphosphate site. An O-linked (GlcNAc) serine glycan is attached at serine 530. An N6-(2-hydroxyisobutyryl)lysine modification is found at lysine 557. Beta-D-fructose 2,6-bisphosphate is bound by residues arginine 566, methionine 573–glycine 575, glutamate 629, arginine 655, and histidine 661–glutamine 664. Phosphoserine is present on serine 667. Beta-D-fructose 2,6-bisphosphate is bound at residue arginine 735. Serine 775 is modified (phosphoserine; by PKA).

It belongs to the phosphofructokinase type A (PFKA) family. ATP-dependent PFK group I subfamily. Eukaryotic two domain clade 'E' sub-subfamily. In terms of assembly, homo- and heterotetramers. Phosphofructokinase (PFK) enzyme functions as a tetramer composed of different combinations of 3 types of subunits, called PFKM (M), PFKL (L) and PFKP (P). The composition of the PFK tetramer differs according to the tissue type it is present in. The kinetic and regulatory properties of the tetrameric enzyme are dependent on the subunit composition, hence can vary across tissues. Interacts (via C-terminus) with HK1 (via N-terminal spermatogenic cell-specific region). Requires Mg(2+) as cofactor. In terms of processing, glcNAcylation decreases enzyme activity.

It localises to the cytoplasm. The catalysed reaction is beta-D-fructose 6-phosphate + ATP = beta-D-fructose 1,6-bisphosphate + ADP + H(+). The protein operates within carbohydrate degradation; glycolysis; D-glyceraldehyde 3-phosphate and glycerone phosphate from D-glucose: step 3/4. Its activity is regulated as follows. Allosterically activated by ADP, AMP, or fructose 2,6-bisphosphate, and allosterically inhibited by ATP or citrate. Its function is as follows. Catalyzes the phosphorylation of D-fructose 6-phosphate to fructose 1,6-bisphosphate by ATP, the first committing step of glycolysis. This chain is ATP-dependent 6-phosphofructokinase, muscle type (PFKM), found in Oryctolagus cuniculus (Rabbit).